The chain runs to 220 residues: Chalcone--flavanone isomerase B (220 aa).

Positions 50, 115, and 192 each coordinate substrate.

It belongs to the chalcone isomerase family.

The catalysed reaction is a chalcone = a flavanone.. It functions in the pathway secondary metabolite biosynthesis; flavonoid biosynthesis. Its function is as follows. Catalyzes the intramolecular cyclization of bicyclic chalcones into tricyclic (S)-flavanones. Responsible for the isomerization of 4,2',4',6'-tetrahydroxychalcone (also termed chalcone) into naringenin. The sequence is that of Chalcone--flavanone isomerase B (CHI2) from Petunia hybrida (Petunia).